The primary structure comprises 118 residues: Large ribosomal subunit protein bL19 (118 aa).

It belongs to the bacterial ribosomal protein bL19 family.

Its function is as follows. This protein is located at the 30S-50S ribosomal subunit interface and may play a role in the structure and function of the aminoacyl-tRNA binding site. The sequence is that of Large ribosomal subunit protein bL19 from Dictyoglomus thermophilum (strain ATCC 35947 / DSM 3960 / H-6-12).